A 640-amino-acid chain; its full sequence is Probable inactive receptor kinase At3g08680 (640 aa).

The N-terminal stretch at 1–22 is a signal peptide; that stretch reads MMKIIAAFLFLLVTTFVSRCLS. LRR repeat units follow at residues 93 to 115, 117 to 138, 139 to 162, 163 to 185, and 186 to 206; these read ALRIISLRSNHLQGNIPSVILSL, FIRSLYFHENNFSGTIPPVLSH, RLVNLDLSANSLSGNIPTSLQNLT, QLTDLSLQNNSLSGPIPNLPPRL, and KYLNLSFNNLNGSVPSSVKSF. Residues 222–249 form a disordered region; it reads LTPCPENTTAPSPSPTTPTEGPGTTNIG. Residues 226–247 show a composition bias toward low complexity; that stretch reads PENTTAPSPSPTTPTEGPGTTN. The chain crosses the membrane as a helical span at residues 260–280; that stretch reads GAIVGIAVGGSVLLFIILAII. Residues 289-315 form a disordered region; that stretch reads DGGQDSTAVPKAKPGRSDNKAEEFGSG. Residues 341–614 enclose the Protein kinase domain; the sequence is RASAEVLGKG…EEVVNMMEEI (274 aa). At S343 the chain carries Phosphoserine. 347-355 provides a ligand contact to ATP; the sequence is LGKGSYGTT. Phosphothreonine is present on T364. ATP is bound at residue K369. 3 positions are modified to phosphothreonine: T441, T514, and T564. Positions 612–640 are disordered; it reads EEIRPSGSGPGSGNRASSPEMIRSSDSPV.

Belongs to the protein kinase superfamily. Tyr protein kinase family.

The protein resides in the membrane. This chain is Probable inactive receptor kinase At3g08680, found in Arabidopsis thaliana (Mouse-ear cress).